The chain runs to 209 residues: ATP-dependent Clp protease proteolytic subunit (209 aa).

The active-site Nucleophile is the Ser107. His132 is a catalytic residue.

The protein belongs to the peptidase S14 family. Fourteen ClpP subunits assemble into 2 heptameric rings which stack back to back to give a disk-like structure with a central cavity, resembling the structure of eukaryotic proteasomes.

Its subcellular location is the cytoplasm. It carries out the reaction Hydrolysis of proteins to small peptides in the presence of ATP and magnesium. alpha-casein is the usual test substrate. In the absence of ATP, only oligopeptides shorter than five residues are hydrolyzed (such as succinyl-Leu-Tyr-|-NHMec, and Leu-Tyr-Leu-|-Tyr-Trp, in which cleavage of the -Tyr-|-Leu- and -Tyr-|-Trp bonds also occurs).. Its function is as follows. Cleaves peptides in various proteins in a process that requires ATP hydrolysis. Has a chymotrypsin-like activity. Plays a major role in the degradation of misfolded proteins. The polypeptide is ATP-dependent Clp protease proteolytic subunit (Ruegeria pomeroyi (strain ATCC 700808 / DSM 15171 / DSS-3) (Silicibacter pomeroyi)).